We begin with the raw amino-acid sequence, 216 residues long: Probable GTP-binding protein EngB (216 aa).

The EngB-type G domain occupies Ser30 to Leu204. Residues Gly38 to Ser45, Gly64 to Leu68, Asp82 to Gly85, Thr149 to Asp152, and Leu182 to Ala185 contribute to the GTP site. Residues Ser45 and Thr66 each contribute to the Mg(2+) site.

It belongs to the TRAFAC class TrmE-Era-EngA-EngB-Septin-like GTPase superfamily. EngB GTPase family. Requires Mg(2+) as cofactor.

Necessary for normal cell division and for the maintenance of normal septation. The sequence is that of Probable GTP-binding protein EngB from Ectopseudomonas mendocina (strain ymp) (Pseudomonas mendocina).